A 388-amino-acid polypeptide reads, in one-letter code: Purple acid phosphatase 19 (388 aa).

Residues M1–A24 form the signal peptide. N-linked (GlcNAc...) asparagine glycans are attached at residues N97 and N111. Fe cation is bound by residues D145 and Y148. Position 145 (D145) interacts with Zn(2+). Residue N182 coordinates Zn(2+). N182 contacts substrate. N226 is a glycosylation site (N-linked (GlcNAc...) asparagine). H238 contributes to the Zn(2+) binding site. The active-site Proton donor is H248. H275 provides a ligand contact to Zn(2+). Residue H275–H277 coordinates substrate. H277 lines the Fe cation pocket. N291 and N348 each carry an N-linked (GlcNAc...) asparagine glycan.

This sequence belongs to the metallophosphoesterase superfamily. Purple acid phosphatase family. As to quaternary structure, homodimer. It depends on Fe cation as a cofactor. Zn(2+) is required as a cofactor. As to expression, specifically expressed in flowers.

It is found in the secreted. It carries out the reaction a phosphate monoester + H2O = an alcohol + phosphate. The chain is Purple acid phosphatase 19 (PAP19) from Arabidopsis thaliana (Mouse-ear cress).